The primary structure comprises 177 residues: Large ribosomal subunit protein uL6 (177 aa).

The protein belongs to the universal ribosomal protein uL6 family. In terms of assembly, part of the 50S ribosomal subunit.

In terms of biological role, this protein binds to the 23S rRNA, and is important in its secondary structure. It is located near the subunit interface in the base of the L7/L12 stalk, and near the tRNA binding site of the peptidyltransferase center. This Rickettsia conorii (strain ATCC VR-613 / Malish 7) protein is Large ribosomal subunit protein uL6.